The chain runs to 201 residues: Envelope glycoprotein (201 aa).

Residues 1–148 are Extracellular-facing; that stretch reads RRARYKKEPV…FNKSPWFTTL (148 aa). The fusion peptide stretch occupies residues 10 to 30; sequence VSLTLALLLGGLTMGGIAAGV. The stretch at 39-75 forms a coiled coil; it reads ATQQFQQLQAAIHDDLKEVEKSITNLEKSLTSLSEVV. The tract at residues 76–92 is immunosuppression; that stretch reads LQNRRGLDLLFLKEGGL. Residues 93–101 carry the CX6CC motif; sequence CAALKEECC. The chain crosses the membrane as a helical span at residues 149 to 169; the sequence is ISTVMGPLIILLLILLFGPCI. The S-palmitoyl cysteine; by host moiety is linked to residue Cys-168. At 170-201 the chain is on the cytoplasmic side; sequence LNRLVQFIKDRISVVQALVLTQQYHQLKTIGD. The short motif at 193 to 196 is the YXXL motif; contains endocytosis signal element; it reads YHQL.

As to quaternary structure, the mature envelope protein (Env) consists of a trimer of SU-TM heterodimers attached by a labile interchain disulfide bond. Specific enzymatic cleavages in vivo yield mature proteins. Envelope glycoproteins are synthesized as an inactive precursor that is N-glycosylated and processed likely by host cell furin or by a furin-like protease in the Golgi to yield the mature SU and TM proteins. The cleavage site between SU and TM requires the minimal sequence [KR]-X-[KR]-R. The R-peptide is released from the C-terminus of the cytoplasmic tail of the TM protein upon particle formation as a result of proteolytic cleavage by the viral protease. Cleavage of this peptide is required for TM to become fusogenic. In terms of processing, the transmembrane protein is palmitoylated. Post-translationally, the R-peptide is palmitoylated.

The protein resides in the virion membrane. It localises to the host cell membrane. In terms of biological role, the surface protein (SU) attaches the virus to the host cell by binding to its receptor. This interaction triggers the refolding of the transmembrane protein (TM) and is thought to activate its fusogenic potential by unmasking its fusion peptide. Fusion occurs at the host cell plasma membrane. The transmembrane protein (TM) acts as a class I viral fusion protein. Under the current model, the protein has at least 3 conformational states: pre-fusion native state, pre-hairpin intermediate state, and post-fusion hairpin state. During viral and target cell membrane fusion, the coiled coil regions (heptad repeats) assume a trimer-of-hairpins structure, positioning the fusion peptide in close proximity to the C-terminal region of the ectodomain. The formation of this structure appears to drive apposition and subsequent fusion of viral and target cell membranes. Membranes fusion leads to delivery of the nucleocapsid into the cytoplasm. This chain is Envelope glycoprotein (env), found in Mus musculus (Mouse).